The chain runs to 239 residues: MINVLIIDDDAMVAELNRRYVAQIPGFQCCGTASTLEKAKEIIFNSDTPIDLILLDIYMQKENGLDLLPVLHNARCKSDVIVISSAADAATIKDSLHYGVVDYLIKPFQASRFEEALTGWRQKKMALEKHQYYDQAELDQLIHGSSSNEQDPRRLPKGLTPQTLRTLCQWIDAHQDYEFSTDELANEVNISRVSCRKYLIWLVNCHILFTSIHYGVTGRPVYRYRIQAEHYSLLKQYCQ.

Residues 3–121 form the Response regulatory domain; sequence NVLIIDDDAM…RFEEALTGWR (119 aa). Residue D56 is modified to 4-aspartylphosphate. A DNA-binding region (H-T-H motif) is located at residues 181-200; the sequence is TDELANEVNISRVSCRKYLI.

Phosphorylated and activated by DcuS.

The protein resides in the cytoplasm. Its function is as follows. Member of the two-component regulatory system DcuR/DcuS. Involved in the C4-dicarboxylate-stimulated regulation of the genes encoding the anaerobic fumarate respiratory system (frdABCD; nuoAN; dcuB; dcuC; sdhCDAB; etc.). Weakly regulates the aerobic C4-dicarboxylate transporter dctA. This chain is Transcriptional regulatory protein DcuR (dcuR), found in Escherichia coli O157:H7.